A 427-amino-acid polypeptide reads, in one-letter code: Phosphoribosylamine--glycine ligase (427 aa).

One can recognise an ATP-grasp domain in the interval 109–313 (RNLMAEYKIE…LAEVVTGITE (205 aa)). 136–191 (VRDHDGDLAVKPIGLTGGKGVRIMGEQVDRAGAIEYIREINGGVVLEERLTGEEFT) contacts ATP. 3 residues coordinate Mg(2+): Q271, E283, and N285. 3 residues coordinate Mn(2+): Q271, E283, and N285.

Belongs to the GARS family. The cofactor is Mg(2+). Mn(2+) is required as a cofactor.

It carries out the reaction 5-phospho-beta-D-ribosylamine + glycine + ATP = N(1)-(5-phospho-beta-D-ribosyl)glycinamide + ADP + phosphate + H(+). Its pathway is purine metabolism; IMP biosynthesis via de novo pathway; N(1)-(5-phospho-D-ribosyl)glycinamide from 5-phospho-alpha-D-ribose 1-diphosphate: step 2/2. The chain is Phosphoribosylamine--glycine ligase from Methanoregula boonei (strain DSM 21154 / JCM 14090 / 6A8).